A 705-amino-acid chain; its full sequence is Ribonuclease R (705 aa).

The RNB domain maps to 240–567 (RRDLREQLCF…VHRLLKKALR (328 aa)). Residues 615–696 (GEEFIGIITG…ERARVEFELI (82 aa)) enclose the S1 motif domain.

This sequence belongs to the RNR ribonuclease family. RNase R subfamily.

The protein resides in the cytoplasm. The enzyme catalyses Exonucleolytic cleavage in the 3'- to 5'-direction to yield nucleoside 5'-phosphates.. Its function is as follows. 3'-5' exoribonuclease that releases 5'-nucleoside monophosphates and is involved in maturation of structured RNAs. In Aquifex aeolicus (strain VF5), this protein is Ribonuclease R.